The sequence spans 469 residues: 6-phospho-beta-galactosidase (469 aa).

Q19, H116, N159, E160, and N297 together coordinate D-galactose 6-phosphate. The Proton donor role is filled by E160. E375 functions as the Nucleophile in the catalytic mechanism. 4 residues coordinate D-galactose 6-phosphate: S428, W429, K435, and Y437.

The protein belongs to the glycosyl hydrolase 1 family.

It carries out the reaction a 6-phospho-beta-D-galactoside + H2O = D-galactose 6-phosphate + an alcohol. The protein operates within carbohydrate metabolism; lactose degradation; D-galactose 6-phosphate and beta-D-glucose from lactose 6-phosphate: step 1/1. The chain is 6-phospho-beta-galactosidase from Streptococcus equi subsp. zooepidemicus (strain H70).